Consider the following 161-residue polypeptide: uncharacterized protein (161 aa).

This is an uncharacterized protein from Mycobacterium bovis (strain ATCC BAA-935 / AF2122/97).